The sequence spans 416 residues: uncharacterized protein (416 aa).

The N-acetyltransferase domain occupies leucine 3–arginine 150. Acetyl-CoA contacts are provided by residues valine 83 to valine 85 and arginine 91 to serine 96. The Proton donor role is filled by tyrosine 124. The Proton acceptor; via carboxylate role is filled by phenylalanine 416.

It belongs to the acetyltransferase Eis family. Homohexamer; trimer of dimers.

This is an uncharacterized protein from Streptomyces griseus subsp. griseus (strain JCM 4626 / CBS 651.72 / NBRC 13350 / KCC S-0626 / ISP 5235).